The chain runs to 289 residues: D-alanine aminotransferase (289 aa).

Tyr-31 contributes to the substrate binding site. Arg-50 is a pyridoxal 5'-phosphate binding site. Residues Arg-99 and His-101 each contribute to the substrate site. The active-site Proton acceptor is Lys-147. Position 147 is an N6-(pyridoxal phosphate)lysine (Lys-147). Residue Glu-179 coordinates pyridoxal 5'-phosphate.

This sequence belongs to the class-IV pyridoxal-phosphate-dependent aminotransferase family. Homodimer. Pyridoxal 5'-phosphate serves as cofactor.

It carries out the reaction D-alanine + 2-oxoglutarate = D-glutamate + pyruvate. Acts on the D-isomers of alanine, leucine, aspartate, glutamate, aminobutyrate, norvaline and asparagine. The enzyme transfers an amino group from a substrate D-amino acid to the pyridoxal phosphate cofactor to form pyridoxamine and an alpha-keto acid in the first half-reaction. The second half-reaction is the reverse of the first, transferring the amino group from the pyridoxamine to a second alpha-keto acid to form the product D-amino acid via a ping-pong mechanism. This is an important process in the formation of D-alanine and D-glutamate, which are essential bacterial cell wall components. The polypeptide is D-alanine aminotransferase (dat) (Listeria innocua serovar 6a (strain ATCC BAA-680 / CLIP 11262)).